A 669-amino-acid polypeptide reads, in one-letter code: Acetolactate synthase, mitochondrial (669 aa).

The N-terminal 140 residues, 1–140 (MTVLAPLRRL…PRHEQAAGHA (140 aa)), are a transit peptide targeting the mitochondrion. A thiamine diphosphate-binding site is contributed by Glu134. Residues Arg236, 351–372 (HGSGYANMAMQEADLILALGVR), and 403–422 (DISPKNIGKVVQPTEAIEGD) contribute to the FAD site. The segment at 497 to 577 (AHQMWAATFY…VKILILNNEE (81 aa)) is thiamine pyrophosphate binding. Mg(2+)-binding residues include Asp548 and Asn575.

Belongs to the TPP enzyme family. Requires Mg(2+) as cofactor. The cofactor is thiamine diphosphate.

The protein resides in the mitochondrion. The enzyme catalyses 2 pyruvate + H(+) = (2S)-2-acetolactate + CO2. It functions in the pathway amino-acid biosynthesis; L-isoleucine biosynthesis; L-isoleucine from 2-oxobutanoate: step 1/4. The protein operates within amino-acid biosynthesis; L-valine biosynthesis; L-valine from pyruvate: step 1/4. This is Acetolactate synthase, mitochondrial (ilv1) from Schizosaccharomyces pombe (strain 972 / ATCC 24843) (Fission yeast).